Reading from the N-terminus, the 311-residue chain is Methionyl-tRNA formyltransferase (311 aa).

112 to 115 (SLLP) serves as a coordination point for (6S)-5,6,7,8-tetrahydrofolate.

Belongs to the Fmt family.

It carries out the reaction L-methionyl-tRNA(fMet) + (6R)-10-formyltetrahydrofolate = N-formyl-L-methionyl-tRNA(fMet) + (6S)-5,6,7,8-tetrahydrofolate + H(+). Attaches a formyl group to the free amino group of methionyl-tRNA(fMet). The formyl group appears to play a dual role in the initiator identity of N-formylmethionyl-tRNA by promoting its recognition by IF2 and preventing the misappropriation of this tRNA by the elongation apparatus. The protein is Methionyl-tRNA formyltransferase of Sinorhizobium fredii (strain NBRC 101917 / NGR234).